Here is a 106-residue protein sequence, read N- to C-terminus: uncharacterized protein (106 aa).

Residues 54–106 are disordered; that stretch reads RSTLVATSPRRRSLVQQRRPPLREQNGGSGSSCVSSGGSASTVKTPGSRRASK. Over residues 84–94 the composition is skewed to low complexity; sequence SSCVSSGGSAS.

This is an uncharacterized protein from Human adenovirus C serotype 2 (HAdV-2).